The following is a 709-amino-acid chain: Glycerol kinase (709 aa).

Threonine 56 contributes to the substrate binding site. ATP is bound at residue arginine 60. Residues 86–110 (KIGVSGLRRPSTAPARETPNAGDIK) form a disordered region. Substrate is bound by residues arginine 201, tyrosine 258, and aspartate 386. ATP-binding positions include threonine 408, glycine 463, and 584–588 (GMSRS).

It belongs to the FGGY kinase family.

The catalysed reaction is glycerol + ATP = sn-glycerol 3-phosphate + ADP + H(+). Its pathway is polyol metabolism; glycerol degradation via glycerol kinase pathway; sn-glycerol 3-phosphate from glycerol: step 1/1. Functionally, key enzyme in the regulation of glycerol uptake and metabolism. Catalyzes the phosphorylation of glycerol to yield sn-glycerol 3-phosphate. The sequence is that of Glycerol kinase (GUT1) from Saccharomyces cerevisiae (strain ATCC 204508 / S288c) (Baker's yeast).